We begin with the raw amino-acid sequence, 131 residues long: Phosphoribosyl-AMP cyclohydrolase (131 aa).

Aspartate 82 contacts Mg(2+). Zn(2+) is bound at residue cysteine 83. 2 residues coordinate Mg(2+): aspartate 84 and aspartate 86. Zn(2+) contacts are provided by cysteine 99 and cysteine 106.

It belongs to the PRA-CH family. As to quaternary structure, homodimer. Requires Mg(2+) as cofactor. The cofactor is Zn(2+).

It localises to the cytoplasm. It carries out the reaction 1-(5-phospho-beta-D-ribosyl)-5'-AMP + H2O = 1-(5-phospho-beta-D-ribosyl)-5-[(5-phospho-beta-D-ribosylamino)methylideneamino]imidazole-4-carboxamide. It functions in the pathway amino-acid biosynthesis; L-histidine biosynthesis; L-histidine from 5-phospho-alpha-D-ribose 1-diphosphate: step 3/9. Functionally, catalyzes the hydrolysis of the adenine ring of phosphoribosyl-AMP. In Methanospirillum hungatei JF-1 (strain ATCC 27890 / DSM 864 / NBRC 100397 / JF-1), this protein is Phosphoribosyl-AMP cyclohydrolase.